Reading from the N-terminus, the 59-residue chain is ADNHARVAGPRAVASGRYATEKAFLQMMTRGSCGLPCHENRRCGWACYCDDGICKPLRV.

Positions 1-30 (ADNHARVAGPRAVASGRYATEKAFLQMMTR) are excised as a propeptide.

Contains 3 disulfide bonds. As to expression, expressed by the venom duct.

It is found in the secreted. Crassispirid snail peptide that induces sleep-like symptoms in young mice (12 and 14 days) and hyperactivity in older mice (16 days), when intracranially injected. The protein is Crassipeptide cce9a of Crassispira cerithina (Sea snail).